A 389-amino-acid polypeptide reads, in one-letter code: MTKRRVVVGMSGGVDSSVTAWLLKEQGYDVVGLFMKNWEDDDDGEYCSTRQDWIDVVSVADLIGIDVEAVNFAAEYKDRVFAEFLREYSAGRTPNPDVLCNAEIKFKAFLDHAMSLDAEMIATGHYARVRERDGRFELLKAFDHTKDQSYFLHRLNQAQLSKTMFPLGEIPKTKVREIAAQIGLPNAKKKDSTGICFIGERPFRDFLNRYLPTKPGPMKTPDGKVIGEHIGLAFYTFGQRKGIGLGGSKDGSGEPWFVAAKDIASNTLYVVQGHDHPWLLSRQLVAGNVSWVAGEPPADGFSCGAKTRYRQADAACSFGRPALGRADGERFSLTFDDAQWAVTPGQSAVLYDGEICLGGGIIEFAATGQPGQTAPAAAAGHAGALAEAR.

Residues 9-16 (GMSGGVDS) and Met35 contribute to the ATP site. The interaction with target base in tRNA stretch occupies residues 95–97 (NPD). The Nucleophile role is filled by Cys100. Cys100 and Cys196 are disulfide-bonded. Gly124 serves as a coordination point for ATP. Residues 146–148 (KDQ) are interaction with tRNA. Residue Cys196 is the Cysteine persulfide intermediate of the active site. The interaction with tRNA stretch occupies residues 308-309 (RY).

It belongs to the MnmA/TRMU family.

It localises to the cytoplasm. The enzyme catalyses S-sulfanyl-L-cysteinyl-[protein] + uridine(34) in tRNA + AH2 + ATP = 2-thiouridine(34) in tRNA + L-cysteinyl-[protein] + A + AMP + diphosphate + H(+). In terms of biological role, catalyzes the 2-thiolation of uridine at the wobble position (U34) of tRNA, leading to the formation of s(2)U34. This chain is tRNA-specific 2-thiouridylase MnmA, found in Burkholderia ambifaria (strain MC40-6).